Here is a 611-residue protein sequence, read N- to C-terminus: Exonuclease V, mitochondrial (611 aa).

The tract at residues 19–42 (VTSEHEQVQSISKEESRSLSSNDL) is disordered. Over residues 21–35 (SEHEQVQSISKEESR) the composition is skewed to basic and acidic residues. Positions 147, 569, 572, and 578 each coordinate [4Fe-4S] cluster.

This sequence belongs to the EXO5 family. As to quaternary structure, monomer. Mg(2+) is required as a cofactor. Requires [4Fe-4S] cluster as cofactor.

The protein localises to the mitochondrion. Functionally, single strand DNA specific 5'exonuclease involved in mitochondrial DNA replication and recombination. Releases dinucleotides as main products of catalysis. Has the capacity to slide across 5'double-stranded DNA or 5'RNA sequences and resumes cutting two nucleotides downstream of the double-stranded-to-single-stranded junction or RNA-to-DNA junction, respectively. In Candida albicans (strain WO-1) (Yeast), this protein is Exonuclease V, mitochondrial (EXO5).